The sequence spans 62 residues: UPF0434 protein RHE_CH03977 (62 aa).

It belongs to the UPF0434 family.

The protein is UPF0434 protein RHE_CH03977 of Rhizobium etli (strain ATCC 51251 / DSM 11541 / JCM 21823 / NBRC 15573 / CFN 42).